A 460-amino-acid polypeptide reads, in one-letter code: Putative E3 ubiquitin-protein ligase RING1b (460 aa).

The interval 1–85 (MPSLKSFSAA…SQSSSAGELS (85 aa)) is disordered. Residues 21 to 31 (SEAERFNPEAV) are compositionally biased toward basic and acidic residues. 2 stretches are compositionally biased toward acidic residues: residues 32-51 (EKEE…DEED) and 59-71 (EAED…EEED). The RING-type zinc-finger motif lies at 103 to 143 (CSICLGIIRKTRTVMECLHRFCRECIDKSMRLGNNECPTCR). The segment at 196–300 (QVSQRQSKAL…TEQTHQRDSR (105 aa)) is disordered. Positions 220–234 (RSRRSGGGSRRRRNC) are enriched in basic residues. A compositionally biased stretch (acidic residues) spans 240–249 (DTSEANDDDD). The segment covering 250–265 (QNKRGKDSSSDEPCER) has biased composition (basic and acidic residues). A compositionally biased stretch (low complexity) spans 276-290 (SSSNANNNDNCAGNG).

In terms of assembly, heterodimer with RING1A. Interacts with CLF. Component of the PRC1-like complex, at least composed of RING1A, RING1B and LHP1.

The protein resides in the nucleus. It carries out the reaction S-ubiquitinyl-[E2 ubiquitin-conjugating enzyme]-L-cysteine + [acceptor protein]-L-lysine = [E2 ubiquitin-conjugating enzyme]-L-cysteine + N(6)-ubiquitinyl-[acceptor protein]-L-lysine.. Its pathway is protein modification; protein ubiquitination. Its function is as follows. Putative E3 ubiquitin-protein ligase that mediates monoubiquitination of 'Lys-119' of histone H2A (H2AK119ub), thereby playing a central role in histone code and gene regulation. Functionally, as part of the PRC1-like complex, repress class I KNOX gene expression. PcG PRC1 complex maintains the transcriptionally repressive state of many genes, including Hox genes, throughout development. PcG PRC1 complex acts via chromatin remodeling and modification of histones, rendering chromatin heritably changed in its expressibility. In Arabidopsis thaliana (Mouse-ear cress), this protein is Putative E3 ubiquitin-protein ligase RING1b (RING1B).